Reading from the N-terminus, the 584-residue chain is A-type ATP synthase subunit A 2 (584 aa).

227–234 (GGFGTGKT) provides a ligand contact to ATP.

This sequence belongs to the ATPase alpha/beta chains family. As to quaternary structure, has multiple subunits with at least A(3), B(3), C, D, E, F, H, I and proteolipid K(x).

It localises to the cell membrane. It catalyses the reaction ATP + H2O + 4 H(+)(in) = ADP + phosphate + 5 H(+)(out). In terms of biological role, component of the A-type ATP synthase that produces ATP from ADP in the presence of a proton gradient across the membrane. The A chain is the catalytic subunit. The chain is A-type ATP synthase subunit A 2 from Methanospirillum hungatei JF-1 (strain ATCC 27890 / DSM 864 / NBRC 100397 / JF-1).